The primary structure comprises 460 residues: Indoleacetamide hydrolase (460 aa).

Catalysis depends on charge relay system residues Lys-71 and Ser-146. Ser-169 (acyl-ester intermediate) is an active-site residue.

This sequence belongs to the amidase family.

It participates in plant hormone metabolism; auxin biosynthesis. Functionally, hydrolyzes indole-3-acetamide (IAM) into indole-3-acetic acid (IAA). The protein is Indoleacetamide hydrolase (iaaH) of Pantoea agglomerans pv. gypsophilae (Erwinia herbicola).